The chain runs to 65 residues: Gene product 5B (65 aa).

The protein belongs to the phi29likevirus GP5.5 family.

In Bacillus subtilis (Bacteriophage PZA), this protein is Gene product 5B (5B).